The primary structure comprises 221 residues: Vesicle transport v-SNARE 13 (221 aa).

At 1–198 (MSQGFERYER…MTRRMNRNKW (198 aa)) the chain is on the cytoplasmic side. A coiled-coil region spans residues 32-93 (EQKKQNLSEI…FKTEVKRITS (62 aa)). The helical; Anchor for type IV membrane protein transmembrane segment at 199 to 219 (TIGAIITVLVLAIIFILYFKL) threads the bilayer. The Vesicular segment spans residues 220-221 (TR).

Belongs to the VTI1 family. As to quaternary structure, forms SNARE complexes with t-SNAREs. Expressed at low levels in roots, stems, flowers and leaves.

The protein localises to the vacuole membrane. It is found in the prevacuolar compartment membrane. The protein resides in the endosome membrane. It localises to the early endosome membrane. In terms of biological role, may function as a v-SNARE responsible for targeting vesicles involved in the secretory pathway. Involved in actin-dependent endosomal trafficking pathways associated with the vacuole within root hairs and root tip epidermal cells. Essential for cell wall organization and polarized root hair growth. Also required for the localization of SYP41 to the trans-Golgi network in root hair cells. This chain is Vesicle transport v-SNARE 13, found in Arabidopsis thaliana (Mouse-ear cress).